The sequence spans 504 residues: Glucose-6-phosphate isomerase (504 aa).

The Proton donor role is filled by E333. Active-site residues include H364 and K473.

This sequence belongs to the GPI family.

It localises to the cytoplasm. It catalyses the reaction alpha-D-glucose 6-phosphate = beta-D-fructose 6-phosphate. It participates in carbohydrate biosynthesis; gluconeogenesis. It functions in the pathway carbohydrate degradation; glycolysis; D-glyceraldehyde 3-phosphate and glycerone phosphate from D-glucose: step 2/4. Catalyzes the reversible isomerization of glucose-6-phosphate to fructose-6-phosphate. The chain is Glucose-6-phosphate isomerase from Xanthomonas euvesicatoria pv. vesicatoria (strain 85-10) (Xanthomonas campestris pv. vesicatoria).